The chain runs to 2442 residues: Histone lysine acetyltransferase CREBBP (2442 aa).

Disordered regions lie at residues 1–40 (MAEN…ENDL) and 74–168 (RGGS…PATS). Position 2 is an N-acetylalanine (A2). Over residues 20–30 (PGFSANDSTDF) the composition is skewed to polar residues. S120 carries the post-translational modification Phosphoserine. Residues 125-168 (GDSSTPSLPKQAASTSGPTPPASQALNPQAQKQVGLVTSSPATS) are compositionally biased toward polar residues. An Omega-N-methylarginine modification is found at R219. The interval 226 to 409 (PAPAMQGATS…GKACQVAHCA (184 aa)) is interaction with SRCAP. Positions 261 to 272 (GGMTKMGMTGNT) are enriched in low complexity. Residues 261 to 290 (GGMTKMGMTGNTSPFGQPFSQTGGQPMGAT) form a disordered region. Over residues 273–284 (SPFGQPFSQTGG) the composition is skewed to polar residues. The TAZ-type 1 zinc finger occupies 346 to 432 (DPEKRKLIQQ…RHDCPVCLPL (87 aa)). Residues H362, C366, C379, C384, H393, C397, C403, C408, H417, C421, C426, and C429 each coordinate Zn(2+). One can recognise a KIX domain in the interval 586–665 (GVRKGWHEHV…KIYKIQKELE (80 aa)). Asymmetric dimethylarginine is present on residues R600 and R624. Residue K656 is modified to N6-acetyllysine. Residues 792-825 (FLPQNQFPSSSGAMSVNSVGMGQPATQAGVSQGQ) show a composition bias toward polar residues. The segment at 792–1084 (FLPQNQFPSS…STSPSQPRKK (293 aa)) is disordered. Composition is skewed to pro residues over residues 846-862 (PCPP…PPPA) and 874-887 (PTPP…PAAP). Positions 894–906 (VSSGQTPTPTPGS) are enriched in polar residues. Composition is skewed to low complexity over residues 909-930 (SAAQ…VTPQ) and 938-957 (PSVA…HTQP). The span at 974–989 (PTPSSVTSAETSSQQP) shows a compositional bias: polar residues. A Glycyl lysine isopeptide (Lys-Gly) (interchain with G-Cter in SUMO1) cross-link involves residue K999. The segment covering 1012-1022 (AESKGEPRSEM) has biased composition (basic and acidic residues). K1015 is modified (N6-acetyllysine). S1031 carries the post-translational modification Phosphoserine. Over residues 1033–1060 (VKEETDTTEQKSEPMEVEEKKPEVKVEA) the composition is skewed to basic and acidic residues. Glycyl lysine isopeptide (Lys-Gly) (interchain with G-Cter in SUMO1) cross-links involve residues K1034 and K1057. Residues 1067-1080 (SANGTASQSTSPSQ) show a composition bias toward polar residues. Residue S1077 is modified to Phosphoserine. Residues 1086–1193 (FKPEELRQAL…EVFEQEIDPV (108 aa)) enclose the Bromo domain. The interaction with histone stretch occupies residues 1125–1171 (DYFDIVKNPMDLSTIKRKLDTGQYQEPWQYVDDVWLMFNNAWLYNRK). The segment at 1163-1181 (NNAWLYNRKTSRVYKFCSK) is interaction with ASF1A. K1217 is subject to N6-acetyllysine. A CBP/p300-type HAT domain is found at 1324-1701 (KFSAKRLQTT…MLVELHTQGQ (378 aa)). S1383 and S1387 each carry phosphoserine; by IKKA. Residues 1434-1436 (YLD) form an interaction with histone region. Acetyl-CoA is bound by residues 1435-1437 (LDS), 1447-1448 (RT), I1494, R1499, and W1503. A coiled-coil region spans residues 1548-1575 (NVLEESIKELEQEEEERKKEESTAASET). The segment covering 1557–1569 (LEQEEEERKKEES) has biased composition (basic and acidic residues). Positions 1557 to 1616 (LEQEEEERKKEESTAASETPEGSQGDSKNAKKKNNKKTNKNKSSISRANKKKPSMPNVSN) are disordered. An N6-acetyllysine mark is found at K1584, K1592, K1593, K1596, and K1598. Over residues 1586–1596 (AKKKNNKKTNK) the composition is skewed to basic residues. The ZZ-type zinc-finger motif lies at 1703–1751 (RFVYTCNECKHHVETRWHCTVCEDYDLCINCYNTKSHTHKMVKWGLGLD). The Zn(2+) site is built by C1708, C1711, C1721, C1724, C1730, C1733, H1739, and H1741. N6-acetyllysine is present on residues K1742 and K1745. S1764 is modified (phosphoserine). The TAZ-type 2 zinc-finger motif lies at 1766–1847 (QESRRLSIQR…KCPVPFCLNI (82 aa)). The disordered stretch occupies residues 1875-1960 (TRNVPQQSLP…QPPPAAVEAA (86 aa)). 2 stretches are compositionally biased toward pro residues: residues 1901-1913 (PQTP…PQPS) and 1944-1955 (PAPPPPAQPPPA). Phosphoserine is present on residues S2064, S2077, and S2080. The segment at 2112-2421 (NQPGMQPQPG…LNTPNRSALS (310 aa)) is disordered. 4 stretches are compositionally biased toward low complexity: residues 2113–2138 (QPGM…HQQP), 2197–2217 (QLLQ…QQQQ), 2261–2280 (MGQM…PGLG), and 2287–2305 (IQQA…KQQI). Composition is skewed to polar residues over residues 2315-2327 (SPQQ…QPQA) and 2334-2343 (QIATSLSNQV). Positions 2349–2372 (VQSPRPQSQPPHSSPSPRIQPQPS) are enriched in pro residues. S2351 carries the phosphoserine modification. A compositionally biased stretch (polar residues) spans 2411 to 2421 (QLNTPNRSALS).

In terms of assembly, part of a complex composed of MSX3, CREBBP/CBP AND EP300/p300; the interaction with MSX3 decreases histone acetylation activity. Found in a complex containing NCOA2; NCOA3; IKKA; IKKB and IKBKG. Probably part of a complex with HIF1A and EP300. Interacts with phosphorylated CREB1. Interacts with the C-terminal region of CITED4. The TAZ-type 1 domain interacts with HIF1A. Interacts with SRCAP, CARM1, ELF3, MLLT7/FOXO4, N4BP2, NCOA1, NCOA3, NCOA6, PCAF, DDX5, DDX17, PELP1, PML, SMAD1, SMAD2, SMAD3, SPIB, TRERF1 and ZCCHC12. Interacts with KLF1; the interaction results in acetylation and enhancement of transcriptional activity of KLF1. Interacts with DAXX; the interaction is dependent on CBP sumoylation and results in suppression of the transcriptional activity via recruitment of HDAC2 to DAXX. Interacts with MAF. Interacts with MTDH. Interacts with MAFG; the interaction acetylates MAFG in the basic region and stimulates NFE2 transcriptional activity through increasing its DNA-binding activity. Interacts with IRF2; the interaction acetylates IRF2 and regulates its activity on the H4 promoter. Interacts (via N-terminus) with SS18L1/CREST (via C-terminus). Interacts with IRF3 (when phosphorylated); forming the dsRNA-activated factor 1 (DRAF1), a complex which activates the transcription of the type I interferon genes. Interacts with MECOM. Interacts with CITED1 (via C-terminus) Interacts with GATA1; the interaction results in acetylation and enhancement of transcriptional activity of GATA1. Interacts with FOXO1; the interaction acetylates FOXO1 and inhibits its transcriptional activity. Interacts with NPAS2, CLOCK and BMAL1. Interacts with ASF1A and ASF1B; this promotes histone acetylation. Interacts with acetylated TP53/p53 and with the acetylated histones H3 and H4. Interacts (via transactivation domain and C-terminus) with PCNA; the interaction occurs on chromatin in UV-irradiated damaged cells. Interacts with DHX9 (via N-terminus); this interaction mediates association with RNA polymerase II holoenzyme and stimulates CREB-dependent transcriptional activation. Interacts with SMAD4; negatively regulated by ZBTB7A. Forms a complex with KMT2A and CREB1. Interacts with DDX3X; this interaction may facilitate HNF4A acetylation. Interacts with MSX1; the interaction may inhibit MSX1 autoinactivation. Interacts with MSX3. Interacts with ACSS2. Methylation of the KIX domain by CARM1 blocks association with CREB. This results in the blockade of CREB signaling, and in activation of apoptotic response. In terms of processing, phosphorylated by CHUK/IKKA at Ser-1383 and Ser-1387; these phosphorylations promote cell growth by switching the binding preference of CREBBP from TP53 to NF-kappa-B. Post-translationally, sumoylation negatively regulates transcriptional activity via the recruitment of DAAX. Autoacetylation is required for binding to protein substrates, such as acetylated histones and acetylated TP53/p53. Autoacetylation is induced by glucose and fatty acids. Expressed in hypothalamus and cortex.

The protein localises to the cytoplasm. Its subcellular location is the nucleus. The catalysed reaction is L-lysyl-[histone] + acetyl-CoA = N(6)-acetyl-L-lysyl-[histone] + CoA + H(+). It carries out the reaction L-lysyl-[protein] + acetyl-CoA = N(6)-acetyl-L-lysyl-[protein] + CoA + H(+). The enzyme catalyses (S)-lactoyl-CoA + L-lysyl-[protein] = N(6)-[(S)-lactoyl]-L-lysyl-[protein] + CoA + H(+). Acetylates histones, giving a specific tag for transcriptional activation. Mediates acetylation of histone H3 at 'Lys-18' and 'Lys-27' (H3K18ac and H3K27ac, respectively). Also acetylates non-histone proteins, like DDX21, FBL, IRF2, MAFG, NCOA3, POLR1E/PAF53 and FOXO1. Binds specifically to phosphorylated CREB and enhances its transcriptional activity toward cAMP-responsive genes. Acts as a coactivator of ALX1. Acts as a circadian transcriptional coactivator which enhances the activity of the circadian transcriptional activators: NPAS2-BMAL1 and CLOCK-BMAL1 heterodimers. Acetylates PCNA; acetylation promotes removal of chromatin-bound PCNA and its degradation during nucleotide excision repair (NER). Acetylates POLR1E/PAF53, leading to decreased association of RNA polymerase I with the rDNA promoter region and coding region. Acetylates DDX21, thereby inhibiting DDX21 helicase activity. Acetylates FBL, preventing methylation of 'Gln-105' of histone H2A (H2AQ104me). In addition to protein acetyltransferase, can use different acyl-CoA substrates, such as lactoyl-CoA, and is able to mediate protein lactylation. Catalyzes lactylation of MRE11 in response to DNA damage, thereby promoting DNA double-strand breaks (DSBs) via homologous recombination (HR). Functions as a transcriptional coactivator for SMAD4 in the TGF-beta signaling pathway. The polypeptide is Histone lysine acetyltransferase CREBBP (Crebbp) (Rattus norvegicus (Rat)).